Reading from the N-terminus, the 353-residue chain is Photosystem II D2 protein (353 aa).

Threonine 2 is subject to N-acetylthreonine. Threonine 2 is subject to Phosphothreonine. The helical transmembrane segment at 41 to 61 (CAYFALGGWFTGTTFVTSWYT) threads the bilayer. Histidine 118 is a binding site for chlorophyll a. The chain crosses the membrane as a helical span at residues 125 to 141 (GFMLRQFELARSVQLRP). Residues glutamine 130 and asparagine 143 each contribute to the pheophytin a site. A helical transmembrane segment spans residues 153–166 (VFVSVFLIYPLGQS). Histidine 198 provides a ligand contact to chlorophyll a. The helical transmembrane segment at 208 to 228 (AALLCAIHGATVENTLFEDGD) threads the bilayer. 2 residues coordinate a plastoquinone: histidine 215 and phenylalanine 262. Histidine 215 lines the Fe cation pocket. Histidine 269 provides a ligand contact to Fe cation. A helical transmembrane segment spans residues 279 to 295 (GLWMSALGVVGLALNLR).

The protein belongs to the reaction center PufL/M/PsbA/D family. In terms of assembly, PSII is composed of 1 copy each of membrane proteins PsbA, PsbB, PsbC, PsbD, PsbE, PsbF, PsbH, PsbI, PsbJ, PsbK, PsbL, PsbM, PsbT, PsbX, PsbY, PsbZ, Psb30/Ycf12, at least 3 peripheral proteins of the oxygen-evolving complex and a large number of cofactors. It forms dimeric complexes. Requires The D1/D2 heterodimer binds P680, chlorophylls that are the primary electron donor of PSII, and subsequent electron acceptors. It shares a non-heme iron and each subunit binds pheophytin, quinone, additional chlorophylls, carotenoids and lipids. There is also a Cl(-1) ion associated with D1 and D2, which is required for oxygen evolution. The PSII complex binds additional chlorophylls, carotenoids and specific lipids. as cofactor.

It localises to the plastid. Its subcellular location is the chloroplast thylakoid membrane. It catalyses the reaction 2 a plastoquinone + 4 hnu + 2 H2O = 2 a plastoquinol + O2. In terms of biological role, photosystem II (PSII) is a light-driven water:plastoquinone oxidoreductase that uses light energy to abstract electrons from H(2)O, generating O(2) and a proton gradient subsequently used for ATP formation. It consists of a core antenna complex that captures photons, and an electron transfer chain that converts photonic excitation into a charge separation. The D1/D2 (PsbA/PsbD) reaction center heterodimer binds P680, the primary electron donor of PSII as well as several subsequent electron acceptors. D2 is needed for assembly of a stable PSII complex. This is Photosystem II D2 protein from Amborella trichopoda.